A 244-amino-acid chain; its full sequence is Mitochondrial import inner membrane translocase subunit Tim21 (244 aa).

The transit peptide at M1 to S18 directs the protein to the mitochondrion. Residues T65–S96 are disordered. A compositionally biased stretch (basic and acidic residues) spans D69–T78. A helical transmembrane segment spans residues S107–F127.

The protein belongs to the TIM21 family. Component of the TIM23 complex. Component of the MITRAC (mitochondrial translation regulation assembly intermediate of cytochrome c oxidase complex) complex, the core components of this complex being COA3/MITRAC12 and COX14. Interacts with COA3 and MT-CO1/COX1.

It is found in the mitochondrion membrane. Functionally, participates in the translocation of transit peptide-containing proteins across the mitochondrial inner membrane. Also required for assembly of mitochondrial respiratory chain complex I and complex IV as component of the MITRAC (mitochondrial translation regulation assembly intermediate of cytochrome c oxidase complex) complex. Probably shuttles between the presequence translocase and respiratory-chain assembly intermediates in a process that promotes incorporation of early nuclear-encoded subunits into these complexes. The chain is Mitochondrial import inner membrane translocase subunit Tim21 (Timm21) from Mus musculus (Mouse).